A 392-amino-acid polypeptide reads, in one-letter code: Putative purine permease 19 (392 aa).

Positions 1-16 (MGFHTKSPDRVTHEEE) are enriched in basic and acidic residues. Residues 1-29 (MGFHTKSPDRVTHEEEANIGVDNQPRETT) are disordered. Ser30 is modified (phosphoserine). 10 helical membrane-spanning segments follow: residues 46–66 (ICIF…TLLL), 88–108 (WLQS…LLLW), 128–148 (LFLL…LYAI), 154–174 (VFFL…TTII), 182–202 (WIIL…TSSG), 220–240 (WCAF…QLGF), 254–274 (VILM…VGLF), 300–320 (LIGL…LVCL), 325–345 (FSNV…VLAF), and 354–374 (FFKE…VYSL).

It belongs to the purine permeases (TC 2.A.7.14) family.

Its subcellular location is the membrane. This chain is Putative purine permease 19 (PUP19), found in Arabidopsis thaliana (Mouse-ear cress).